Reading from the N-terminus, the 7570-residue chain is MAGYLSPAAYLYVEEQEYLQAYEDVLERYKDERDKVQKKTFTKWINQHLMKVRKHVNDLYEDLRDGHNLISLLEVLSGDTLPREKGRMRFHRLQNVQIALDYLKRRQVKLVNIRNDDITDGNPKLTLGLIWTIILHFQISDIHVTGESEDMSAKERLLLWTQQATEGYAGIRCENFTTCWRDGKLFNAIIHKYRPDLIDMNTVAVQSNLANLEHAFYVAEKIGVIRLLDPEDVDVSSPDEKSVITYVSSLYDAFPKVPEGGEGIGANDVEVKWIEYQNMVNYLIQWIRHHVTTMSERTFPNNPVELKALYNQYLQFKETEIPPKETEKSKIKRLYKLLEIWIEFGRIKLLQGYHPNDIEKEWGKLIIAMLEREKALRPEVERLEMLQQIANRVQRDSVICEDKLILAGNALQSDSKRLESGVQFQNEAEIAGYILECENLLRQHVIDVQILIDGKYYQADQLVQRVAKLRDEIMALRNECSSVYSKGRILTTEQTKLMISGITQSLNSGFAQTLHPSLTSGLTQSLTPSLTSSSMTSGLSSGMTSRLTPSVTPAYTPGFPSGLVPNFSSGVEPNSLQTLKLMQIRKPLLKSSLLDQNLTEEEINMKFVQDLLNWVDEMQVQLDRTEWGSDLPSVESHLENHKNVHRAIEEFESSLKEAKISEIQMTAPLKLTYAEKLHRLESQYAKLLNTSRNQERHLDTLHNFVSRATNELIWLNEKEEEEVAYDWSERNTNIARKKDYHAELMRELDQKEENIKSVQEIAEQLLLENHPARLTIEAYRAAMQTQWSWILQLCQCVEQHIKENTAYFEFFNDAKEATDYLRNLKDAIQRKYSCDRSSSIHKLEDLVQESMEEKEELLQYKSTIANLMGKAKTIIQLKPRNSDCPLKTSIPIKAICDYRQIEITIYKDDECVLANNSHRAKWKVISPTGNEAMVPSVCFTVPPPNKEAVDLANRIEQQYQNVLTLWHESHINMKSVVSWHYLINEIDRIRASNVASIKTMLPGEHQQVLSNLQSRFEDFLEDSQESQVFSGSDITQLEKEVNVCKQYYQELLKSAEREEQEESVYNLYISEVRNIRLRLENCEDRLIRQIRTPLERDDLHESVFRITEQEKLKKELERLKDDLGTITNKCEEFFSQAAASSSVPTLRSELNVVLQNMNQVYSMSSTYIDKLKTVNLVLKNTQAAEALVKLYETKLCEEEAVIADKNNIENLISTLKQWRSEVDEKRQVFHALEDELQKAKAISDEMFKTYKERDLDFDWHKEKADQLVERWQNVHVQIDNRLRDLEGIGKSLKYYRDTYHPLDDWIQQVETTQRKIQENQPENSKTLATQLNQQKMLVSEIEMKQSKMDECQKYAEQYSATVKDYELQTMTYRAMVDSQQKSPVKRRRMQSSADLIIQEFMDLRTRYTALVTLMTQYIKFAGDSLKRLEEEEKSLEEEKKEHVEKAKELQKWVSNISKTLKDAEKAGKPPFSKQKISSEEISTKKEQLSEALQTIQLFLAKHGDKMTDEERNELEKQVKTLQESYNLLFSESLKQLQESQTSGDVKVEEKLDKVIAGTIDQTTGEVLSVFQAVLRGLIDYDTGIRLLETQLMISGLISPELRKCFDLKDAKSHGLIDEQILCQLKELSKAKEIISAASPTTIPVLDALAQSMITESMAIKVLEILLSTGSLVIPATGEQLTLQKAFQQNLVSSALFSKVLERQNMCKDLIDPCTSEKVSLIDMVQRSTLQENTGMWLLPVRPQEGGRITLKCGRNISILRAAHEGLIDRETMFRLLSAQLLSGGLINSNSGQRMTVEEAVREGVIDRDTASSILTYQVQTGGIIQSNPAKRLTVDEAVQCDLITSSSALLVLEAQRGYVGLIWPHSGEIFPTSSSLQQELITNELAYKILNGRQKIAALYIPESSQVIGLDAAKQLGIIDNNTASILKNITLPDKMPDLGDLEACKNARRWLSFCKFQPSTVHDYRQEEDVFDGEEPVTTQTSEETKKLFLSYLMINSYMDANTGQRLLLYDGDLDEAVGMLLEGCHAEFDGNTAIKECLDVLSSSGVFLNNASGREKDECTATPSSFNKCHCGEPEHEETPENRKCAIDEEFNEMRNTVINSEFSQSGKLASTISIDPKVNSSPSVCVPSLISYLTQTELADISMLRSDSENILTNYENQSRVETNERANECSHSKNIQNFPSDLIENPIMKSKMSKFCGVNETENEDNTNRDSPIFDYSPRLSALLSHDKLMHSQGSFNDTHTPESNGNKCEAPALSFSDKTMLSGQRIGEKFQDQFLGIAAINISLPGEQYGQKSLNMISSNPQVQYHNDKYISNTSGEDEKTHPGFQQMPEDKEDESEIEEYSCAVTPGGDTDNAIVSLTCATPLLDETISASDYETSLLNDQQNNTGTDTDSDDDFYDTPLFEDDDHDSLLLDGDDRDCLHPEDYDTLQEENDETASPADVFYDVSKENENSMVPQGAPVGSLSVKNKAHCLQDFLMDVEKDELDSGEKIHLNPVGSDKVNGQSLETGSERECTNILEGDESDSLTDYDIVGGKESFTASLKFDDSGSWRGRKEEYVTGQEFHSDTDHLDSMQSEESYGDYIYDSNDQDDDDDDGIDEEGGGIRDENGKPRCQNVAEDMDIQLCASILNENSDENENINTMILLDKMHSCSSLEKQQRVNVVQLASPSENNLVTEKSNLPEYTTEIAGKSKENLLNHEMVLKDVLPPIIKDTESEKTFGPASISHDNNNISSTSELGTDLANTKVKLIQGSELPELTDSVKGKDEYFKNMTPKVDSSLDHIICTEPDLIGKPAEESHLSLIASVTDKDPQGNGSDLIKGRDGKSDILIEDETSIQKMYLGEGEVLVEGLVEEENRHLKLLPGKNTRDSFKLINSQFPFPQITNNEELNQKGSLKKATVTLKDEPNNLQIIVSKSPVQFENLEEIFDTSVSKEISDDITSDITSWEGNTHFEESFTDGPEKELDLFTYLKHCAKNIKAKDVAKPNEDVPSHVLITAPPMKEHLQLGVNNTKEKSTSTQKDSPLNDMIQSNDLCSKESISGGGTEISQFTPESIEATLSILSRKHVEDVGKNDFLQSERCANGLGNDNSSNTLNTDYSFLEINNKKERIEQQLPKEQALSPRSQEKEVQIPELSQVFVEDVKDILKSRLKEGHMNPQEVEEPSACADTKILIQNLIKRITTSQLVNEASTVPSDSQMSDSSGVSPMTNSSELKPESRDDPFCIGNLKSELLLNILKQDQHSQKITGVFELMRELTHMEYDLEKRGITSKVLPLQLENIFYKLLADGYSEKIEHVGDFNQKACSTSEMMEEKPHILGDIKSKEGNYYSPNLETVKEIGLESSTVWASTLPRDEKLKDLCNDFPSHLECTSGSKEMASGDSSTEQFSSELQQCLQHTEKMHEYLTLLQDMKPPLDNQESLDNNLEALKNQLRQLETFELGLAPIAVILRKDMKLAEEFLKSLPSDFPRGHVEELSISHQSLKTAFSSLSNVSSERTKQIMLAIDSEMSKLAVSHEEFLHKLKSFSDWVSEKSKSVKDIEIVNVQDSEYVKKRLEFLKNVLKDLGHTKMQLETTAFDVQFFISEYAQDLSPNQSKQLLRLLNTTQKCFLDVQESVTTQVERLETQLHLEQDLDDQKIVAERQQEYKEKLQGICDLLTQTENRLIGHQEAFMIGDGTVELKKYQSKQEELQKDMQGSAQALAEVVKNTENFLKENGEKLSQEDKALIEQKLNEAKIKCEQLNLKAEQSKKELDKVVTTAIKEETEKVAAVKQLEESKTKIENLLDWLSNVDKDSERAGTKHKQVIEQNGTHFQEGDGKSAIGEEDEVNGNLLETDVDGQVGTTQENLNQQYQKVKAQHEKIISQHQAVIIATQSAQVLLEKQGQYLSPEEKEKLQKNMKELKVHYETALAESEKKMKLTHSLQEELEKFDADYTEFEHWLQQSEQELENLEAGADDINGLMTKLKRQKSFSEDVISHKGDLRYITISGNRVLEAAKSCSKRDGGKVDTSATHREVQRKLDHATDRFRSLYSKCNVLGNNLKDLVDKYQHYEDASCGLLAGLQACEATASKHLSEPIAVDPKNLQRQLEETKALQGQISSQQVAVEKLKKTAEVLLDARGSLLPAKNDIQKTLDDIVGRYEDLSKSVNERNEKLQITLTRSLSVQDGLDEMLDWMGNVESSLKEQGQVPLNSTALQDIISKNIMLEQDIAGRQSSINAMNEKVKKFMETTDPSTASSLQAKMKDLSARFSEASHKHKETLAKMEELKTKVELFENLSEKLQTFLETKTQALTEVDVPGKDVTELSQYMQESTSEFLEHKKHLEVLHSLLKEISSHGLPSDKALVLEKTNNLSKKFKEMEDTIKEKKEAVTSCQEQLDAFQVLVKSLKSWIKETTKKVPIVQPSFGAEDLGKSLEDTKKLQEKWSLKTPEIQKVNNSGISLCNLISAVTTPAKAIAAVKSGGAVLNGEGTATNTEEFWANKGLTSIKKDMTDISHGYEDLGLLLKDKIAELNTKLSKLQKAQEESSAMMQWLQKMNKTATKWQQTPAPTDTEAVKTQVEQNKSFEAELKQNVNKVQELKDKLTELLEENPDTPEAPRWKQMLTEIDSKWQELNQLTIDRQQKLEESSNNLTQFQTVEAQLKQWLVEKELMVSVLGPLSIDPNMLNTQRQQVQILLQEFATRKPQYEQLTAAGQGILSRPGEDPSLRGIVKEQLAAVTQKWDSLTGQLSDRCDWIDQAIVKSTQYQSLLRSLSDKLSDLDNKLSSSLAVSTHPDAMNQQLETAQKMKQEIQQEKKQIKVAQALCEDLSALVKEEYLKAELSRQLEGILKSFKDVEQKAENHVQHLQSACASSHQFQQMSRDFQAWLDTKKEEQNKSHPISAKLDVLESLIKDHKDFSKTLTAQSHMYEKTIAEGENLLLKTQGSEKAALQLQLNTIKTNWDTFNKQVKERENKLKESLEKALKYKEQVETLWPWIDKCQNNLEEIKFCLDPAEGENSIAKLKSLQKEMDQHFGMVELLNNTANSLLSVCEIDKEVVTDENKSLIQKVDMVTEQLHSKKFCLENMTQKFKEFQEVSKESKRQLQCAKEQLDIHDSLGSQAYSNKYLTMLQTQQKSLQALKHQVDLAKRLAQDLVVEASDSKGTSDVLLQVETIAQEHSTLSQQVDEKCSFLETKLQGIGHFQNTIREMFSQFAEFDDELDSMAPVGRDAETLQKQKETIKAFLKKLEALMASNDNANKTCKMMLATEETSPDLVGIKRDLEALSKQCNKLLDRAQAREEQVEGTIKRLEEFYSKLKEFSILLQKAEEHEESQGPVGMETETINQQLNMFKVFQKEEIEPLQGKQQDVNWLGQGLIQSAAKSTSTQGLEHDLDDVNARWKTLNKKVAQRAAQLQEALLHCGRFQDALESLLSWMVDTEELVANQKPPSAEFKVVKAQIQEQKLLQRLLDDRKSTVEVIKREGEKIATTAEPADKVKILKQLSLLDSRWEALLNKAETRNRQLEGISVVAQQFHETLEPLNEWLTTIEKRLVNCEPIGTQASKLEEQIAQHKALEDDIINHNKHLHQAVSIGQSLKVLSSREDKDMVQSKLDFSQVWYIEIQEKSHSRSELLQQALCNAKIFGEDEVELMNWLNEVHDKLSKLSVQDYSTEGLWKQQSELRVLQEDILLRKQNVDQALLNGLELLKQTTGDEVLIIQDKLEAIKARYKDITKLSTDVAKTLEQALQLARRLHSTHEELCTWLDKVEVELLSYETQVLKGEEASQAQMRPKELKKEAKNNKALLDSLNEVSSALLELVPWRAREGLEKMVAEDNERYRLVSDTITQKVEEIDAAILRSQQFDQAADAELSWITETEKKLMSLGDIRLEQDQTSAQLQVQKTFTMEILRHKDIIDDLVKSGHKIMTACSEEEKQSMKKKLDKVLKNYDTICQINSERYLQLERAQSLVNQFWETYEELWPWLTETQSIISQLPAPALEYETLRQQQEEHRQLRELIAEHKPHIDKMNKTGPQLLELSPGEGFSIQEKYVAADTLYSQIKEDVKKRAVALDEAISQSTQFHDKIDQILESLERIVERLRQPPSISAEVEKIKEQISENKNVSVDMEKLQPLYETLKQRGEEMIARSGGTDKDISAKAVQDKLDQMVFIWENIHTLVEEREAKLLDVMELAEKFWCDHMSLIVTIKDTQDFIRDLEDPGIDPSVVKQQQEAAETIREEIDGLQEELDIVINLGSELIAACGEPDKPIVKKSIDELNSAWDSLNKAWKDRIDKLEEAMQAAVQYQDGLQAVFDWVDIAGGKLASMSPIGTDLETVKQQIEELKQFKSEAYQQQIEMERLNHQAELLLKKVTEESDKHTVQDPLMELKLIWDSLEERIINRQHKLEGALLALGQFQHALDELLAWLTHTEGLLSEQKPVGGDPKAIEIELAKHHVLQNDVLAHQSTVEAVNKAGNDLIESSAGEEASNLQNKLEVLNQRWQNVLEKTEQRKQQLDGALRQAKGFHGEIEDLQQWLTDTERHLLASKPLGGLPETAKEQLNVHMEVCAAFEAKEETYKSLMQKGQQMLARCPKSAETNIDQDINNLKEKWESVETKLNERKTKLEEALNLAMEFHNSLQDFINWLTQAEQTLNVASRPSLILDTVLFQIDEHKVFANEVNSHREQIIELDKTGTHLKYFSQKQDVVLIKNLLISVQSRWEKVVQRLVERGRSLDDARKRAKQFHEAWSKLMEWLEESEKSLDSELEIANDPDKIKTQLAQHKEFQKSLGAKHSVYDTTNRTGRSLKEKTSLADDNLKLDDMLSELRDKWDTICGKSVERQNKLEEALLFSGQFTDALQALIDWLYRVEPQLAEDQPVHGDIDLVMNLIDNHKAFQKELGKRTSSVQALKRSARELIEGSRDDSSWVKVQMQELSTRWETVCALSISKQTRLEAALRQAEEFHSVVHALLEWLAEAEQTLRFHGVLPDDEDALRTLIDQHKEFMKKLEEKRAELNKATTMGDTVLAICHPDSITTIKHWITIIRARFEEVLAWAKQHQQRLASALAGLIAKQELLEALLAWLQWAETTLTDKDKEVIPQEIEEVKALIAEHQTFMEEMTRKQPDVDKVTKTYKRRAADPSSLQSHIPVLDKGRAGRKRFPASSLYPSGSQTQIETKNPRVNLLVSKWQQVWLLALERRRKLNDALDRLEELREFANFDFDIWRKKYMRWMNHKKSRVMDFFRRIDKDQDGKITRQEFIDGILSSKFPTSRLEMSAVADIFDRDGDGYIDYYEFVAALHPNKDAYKPITDADKIEDEVTRQVAKCKCAKRFQVEQIGDNKYRFFLGNQFGDSQQLRLVRILRSTVMVRVGGGWMALDEFLVKNDPCRVHHHGSKMLRSESNSSITTTQPTIAKGRTNMELREKFILADGASQGMAAFRPRGRRSRPSSRGASPNRSTSVSSQAAQAASPQVPATTTPKGTPIQGSKLRLPGYLSGKGFHSGEDSGLITTAAARVRTQFADSKKTPSRPGSRAGSKAGSRASSRRGSDASDFDISEIQSVCSDVETVPQTHRPTPRAGSRPSTAKPSKIPTPQRKSPASKLDKSSKR.

Calponin-homology (CH) domains are found at residues 35-138 (KVQK…LHFQ) and 151-255 (MSAK…DAFP). The interval 35–252 (KVQKKTFTKW…VITYVSSLYD (218 aa)) is actin-binding. A phosphoserine mark is found at Leu-135, Lys-184, Ser-236, and Ser-237. Spectrin repeat units lie at residues 602–699 (EINM…RHLD) and 701–802 (LHNF…QHIK). In terms of domain architecture, SH3 spans 887-944 (KTSIPIKAICDYRQIEITIYKDDECVLANNSHRAKWKVISPTGNEAMVPSVCFTVPPP). Spectrin repeat units follow at residues 1293-1422 (KYYR…KFAG) and 1440-1540 (KEHV…QESQ). Ser-1382 carries the phosphoserine modification. Positions 1383 to 1389 (PVKRRRM) match the Nuclear localization signal; in isoform 6 motif. Glu-1565 is subject to Phosphoserine. Plectin repeat units follow at residues 1584–1626 (IRLL…QLKE), 1660–1703 (KVLE…LERQ), 1774–1817 (RLLS…LTYQ), 1818–1855 (VQTGGIIQSNPAKRLTVDEAVQCDLITSSSALLVLEAQ), and 1856–1891 (RGYVGLIWPHSGEIFPTSSSLQQELITNELAYKILN). Ser-2229 is subject to Phosphoserine. Disordered regions lie at residues 2317–2346 (SNTSGEDEKTHPGFQQMPEDKEDESEIEEY), 2383–2441 (LLND…DETA), and 2585–2616 (DYIYDSNDQDDDDDDGIDEEGGGIRDENGKPR). Residues 2336 to 2345 (DKEDESEIEE) show a composition bias toward acidic residues. The span at 2385–2394 (NDQQNNTGTD) shows a compositional bias: low complexity. Composition is skewed to acidic residues over residues 2395 to 2412 (TDSDDDFYDTPLFEDDDH), 2430 to 2439 (YDTLQEENDE), and 2591 to 2605 (NDQDDDDDDGIDEEG). Ser-2919 bears the Phosphoserine mark. Residues 3190–3221 (EASTVPSDSQMSDSSGVSPMTNSSELKPESRD) form a disordered region. The segment covering 3192–3209 (STVPSDSQMSDSSGVSPM) has biased composition (low complexity). Spectrin repeat units follow at residues 3395 to 3501 (LQHT…KQIM), 3643 to 3752 (QEYK…KELD), 3926 to 4040 (EKFD…NNLK), 4047 to 4153 (QHYE…EKLQ), 4160 to 4259 (LSVQ…ETLA), 4269 to 4368 (ELFE…EAVT), 4516 to 4621 (QKAQ…QKLE), 4628 to 4732 (TQFQ…DWID), 4742 to 4842 (QSLL…QHLQ), 4849 to 4951 (HQFQ…NKLK), 4958 to 5058 (LKYK…FCLE), 5068 to 5167 (QEVS…SFLE), 5174 to 5277 (GHFQ…EQVE), 5284 to 5388 (EEFY…AQLQ), 5395 to 5497 (GRFQ…RQLE), 5504 to 5715 (QQFH…KTLE), 5831 to 5933 (QQFD…LQLE), 5941 to 6041 (QFWE…VALD), 6048 to 6154 (TQFH…AKLL), 6161 to 6263 (EKFW…DKLE), 6270 to 6373 (VQYQ…HKLE), 6380 to 6482 (GQFQ…QQLD), 6489 to 6591 (KGFH…TKLE), 6598 to 6700 (MEFH…RSLD), 6707 to 6810 (KQFH…NKLE), 6817 to 6918 (GQFT…TRLE), 6925 to 7027 (EEFH…QRLA), and 7037 to 7167 (QELL…RKLN). At Ser-3968 the chain carries Phosphoserine. Position 4749 is a phosphoserine (Ser-4749). Lys-5470 participates in a covalent cross-link: Glycyl lysine isopeptide (Lys-Gly) (interchain with G-Cter in ubiquitin). 2 EF-hand domains span residues 7197–7232 (HKKSRVMDFFRRIDKDQDGKITRQEFIDGILSSKFP) and 7233–7268 (TSRLEMSAVADIFDRDGDGYIDYYEFVAALHPNKDA). Asp-7210, Asp-7212, Asp-7214, Lys-7216, Glu-7221, Asp-7246, Asp-7248, Asp-7250, Tyr-7252, and Glu-7257 together coordinate Ca(2+). Positions 7273–7351 (TDADKIEDEV…EFLVKNDPCR (79 aa)) constitute a GAR domain. Disordered regions lie at residues 7358-7379 (KMLRSESNSSITTTQPTIAKGR), 7395-7452 (SQGM…SKLR), and 7481-7570 (QFAD…SSKR). A compositionally biased stretch (polar residues) spans 7362-7374 (SESNSSITTTQPT). Low complexity-rich tracts occupy residues 7411–7441 (SSRGASPNRSTSVSSQAAQAASPQVPATTTP) and 7490–7504 (SRPGSRAGSKAGSRA). At Ser-7432 the chain carries Phosphoserine. Phosphoserine occurs at positions 7510, 7513, and 7525. Polar residues predominate over residues 7519–7535 (EIQSVCSDVETVPQTHR). The Microtubule tip localization signal motif lies at 7550 to 7553 (SKIP).

In terms of assembly, homodimer. Isoform 1 interacts (via N-terminus) with PLEC (via N-terminus). Interacts with the neuronal intermediate filament protein, PRPH. Interacts with DES. Interacts with SYNE3. Isoform 1 and isoform 6 can homodimerize (via N-terminus). Isoform 1 interacts (via N-terminus) with ACTN2. Isoform 1 interacts (via N-terminus) with PLEC (via N-terminus). Isoform 3 interacts (via N-terminus) with COL17A1 (via cytoplasmic region). Isoform 3 interacts (via N-terminus) with ITGB4 isoform beta-4a (via cytoplasmic region). Isoform 3 interacts (via N-terminus) with ERBIN (via C-terminus). Isoform 3 associates (via C-terminal) with KRT5-KRT14 (via rod region) intermediate filaments of keratins. Interacts with MAPRE1; probably required for targeting to the growing microtubule plus ends. Interacts with TMIGD2. Isoform 9 interacts with TMEM108. Isoform 1 is expressed in myoblasts (at protein level). Isoform 3 is expressed in the skin. Isoform 6 is expressed in the brain. Highly expressed in skeletal muscle and cultured keratinocytes.

Its subcellular location is the cytoplasm. The protein localises to the cytoskeleton. The protein resides in the stress fiber. It is found in the cell projection. It localises to the axon. Its subcellular location is the myofibril. The protein localises to the sarcomere. The protein resides in the z line. It is found in the h zone. It localises to the cell junction. Its subcellular location is the hemidesmosome. The protein localises to the nucleus. The protein resides in the nucleus envelope. It is found in the membrane. It localises to the endoplasmic reticulum membrane. Its subcellular location is the cell cortex. The protein localises to the cell membrane. Its function is as follows. Cytoskeletal linker protein. Acts as an integrator of intermediate filaments, actin and microtubule cytoskeleton networks. Required for anchoring either intermediate filaments to the actin cytoskeleton in neural and muscle cells or keratin-containing intermediate filaments to hemidesmosomes in epithelial cells. The proteins may self-aggregate to form filaments or a two-dimensional mesh. Regulates the organization and stability of the microtubule network of sensory neurons to allow axonal transport. Mediates docking of the dynein/dynactin motor complex to vesicle cargos for retrograde axonal transport through its interaction with TMEM108 and DCTN1. In terms of biological role, plays a structural role in the assembly of hemidesmosomes of epithelial cells; anchors keratin-containing intermediate filaments to the inner plaque of hemidesmosomes. Required for the regulation of keratinocyte polarity and motility; mediates integrin ITGB4 regulation of RAC1 activity. Functionally, required for bundling actin filaments around the nucleus. Regulates the organization and stability of the microtubule network of sensory neurons to allow axonal transport. This is Dystonin from Homo sapiens (Human).